A 392-amino-acid chain; its full sequence is Heat-inducible transcription repressor HrcA (392 aa).

Belongs to the HrcA family.

In terms of biological role, negative regulator of class I heat shock genes (grpE-dnaK-dnaJ and groELS operons). Prevents heat-shock induction of these operons. The sequence is that of Heat-inducible transcription repressor HrcA from Chlamydia trachomatis serovar L2 (strain ATCC VR-902B / DSM 19102 / 434/Bu).